A 149-amino-acid chain; its full sequence is Transcriptional repressor NrdR (149 aa).

Residues 3-34 (CPFCSAVDTKVIDSRLVGDGSQVRRRRQCLVC) fold into a zinc finger. An ATP-cone domain is found at 49–139 (PRVVKSNGVR…VYRSFEDVRE (91 aa)).

The protein belongs to the NrdR family. The cofactor is Zn(2+).

Negatively regulates transcription of bacterial ribonucleotide reductase nrd genes and operons by binding to NrdR-boxes. This is Transcriptional repressor NrdR from Edwardsiella ictaluri (strain 93-146).